The following is a 247-amino-acid chain: MIILFDVGNTSIYTGLSNGTNIDETFRMNTDIHKSPDEYFVTLKSFIDPNVITGVIIGSVVPLVTQALIALTEKYLKLKPVVIEPGTKTGIFVKADNPREVGADLIANAAGLDNPHPTLIIDLGTANKLIYVKNQMITGVIIAPGLQLSIHALDGNTALLHEVDIKVPKKYLGNNTIHCIQSGVVYGTIVMIEGMFGRIREEVGEDFDVIITGGLSSLILEHIRLDIKQDKELVLKGLLNIYKKNIK.

Aspartate 6–tyrosine 13 lines the ATP pocket. Glycine 102–leucine 105 lines the substrate pocket. Aspartate 104 (proton acceptor) is an active-site residue. Aspartate 122 is a binding site for K(+). ATP is bound at residue threonine 125. Residue threonine 176 coordinates substrate.

Belongs to the type III pantothenate kinase family. In terms of assembly, homodimer. The cofactor is NH4(+). It depends on K(+) as a cofactor.

Its subcellular location is the cytoplasm. The catalysed reaction is (R)-pantothenate + ATP = (R)-4'-phosphopantothenate + ADP + H(+). Its pathway is cofactor biosynthesis; coenzyme A biosynthesis; CoA from (R)-pantothenate: step 1/5. Its function is as follows. Catalyzes the phosphorylation of pantothenate (Pan), the first step in CoA biosynthesis. This Acholeplasma laidlawii (strain PG-8A) protein is Type III pantothenate kinase.